The following is a 274-amino-acid chain: Dehydration-responsive element-binding protein 2A (274 aa).

2 stretches are compositionally biased toward basic and acidic residues: residues 1–10 (MERGEGRRGD) and 35–50 (KWWK…ENSS). The disordered stretch occupies residues 1-75 (MERGEGRRGD…KGGPENSNCA (75 aa)). The segment at residues 75–132 (AYRGVRQRTWGKWVAEIREPNRGRRLWLGSFPTALEAAHAYDEAARAMYGPTARVNFA) is a DNA-binding region (AP2/ERF).

This sequence belongs to the AP2/ERF transcription factor family. ERF subfamily.

It localises to the nucleus. In terms of biological role, transcriptional activator that binds specifically to the DNA sequence 5'-[AG]CCGAC-3' of the cis-acting dehydration-responsive element (DRE). Binding to the C-repeat/DRE element mediates high salinity- and dehydration-inducible transcription. The polypeptide is Dehydration-responsive element-binding protein 2A (DREB2A) (Oryza sativa subsp. japonica (Rice)).